Here is a 498-residue protein sequence, read N- to C-terminus: Tyrosine 3-monooxygenase (498 aa).

A compositionally biased stretch (pro residues) spans 1–10; it reads MPTPSAPSPQ. Residues 1–31 form a disordered region; it reads MPTPSAPSPQPKGFRRAVSEQDAKQAEAVTS. Serine 19 is modified (phosphoserine; by CaMK2). Phosphoserine is present on serine 31. Serine 40 carries the post-translational modification Phosphoserine; by CaMK2 and PKA. The Fe cation site is built by histidine 331, histidine 336, and glutamate 376. Serine 472 is subject to Phosphoserine.

This sequence belongs to the biopterin-dependent aromatic amino acid hydroxylase family. As to quaternary structure, homotetramer. Interacts (when phosphorylated at Ser-19) with YWHAG; one YWHAG dimer binds to one TH tetramer and this interaction may influence the phosphorylation and dephosphorylation of other sites. Interacts with NT5DC2; the interaction results in reduced phosphorylation and decreased catalytic activity of TH. It depends on Fe(2+) as a cofactor. Phosphorylated on Ser-19, Ser-31 and Ser-40 by several protein kinases with different site specificities. Phosphorylation at Ser-31 and Ser-40 leads to an increase of TH activity. Phosphorylation at Ser-40 activates the enzyme and also counteracts the feedback inhibition of TH by catecholamines. Phosphorylation of Ser-19 and Ser-31 triggers the proteasomal degradation of TH through the ubiquitin-proteasome pathway. Phosphorylation at Ser-31 facilitates transport of TH from the soma to the nerve terminals via the microtubule network. Phosphorylation at Ser-19 induces the high-affinity binding to the 14-3-3 protein YWHAG; this interaction may influence the phosphorylation and dephosphorylation of other sites. Ser-19 increases the phosphorylation at Ser-40 in a hierarchical manner, leading to increased activity.

The protein resides in the cytoplasm. The protein localises to the perinuclear region. It is found in the nucleus. It localises to the cell projection. Its subcellular location is the axon. The protein resides in the cytoplasmic vesicle. The protein localises to the secretory vesicle. It is found in the synaptic vesicle. It catalyses the reaction (6R)-L-erythro-5,6,7,8-tetrahydrobiopterin + L-tyrosine + O2 = (4aS,6R)-4a-hydroxy-L-erythro-5,6,7,8-tetrahydrobiopterin + L-dopa. Its pathway is catecholamine biosynthesis; dopamine biosynthesis; dopamine from L-tyrosine: step 1/2. Its activity is regulated as follows. Inhibited in feedback fashion by the catecholamine neurotransmitters, especially by dopamine in competition with tetrahydrobiopterin. Phosphorylation of several Ser/Thr residues in the N-terminus regulates the catalytic activity. Ser-31 and Ser-40 are readily phosphorylated to activate the catalytic activity. A cysteine modification induced by N-ethylmaleimide (NEM), inhibits tyrosine 3-monooxygenase activity through the modification of the Cys-177. Functionally, catalyzes the conversion of L-tyrosine to L-dihydroxyphenylalanine (L-Dopa), the rate-limiting step in the biosynthesis of catecholamines, dopamine, noradrenaline, and adrenaline. Uses tetrahydrobiopterin and molecular oxygen to convert tyrosine to L-Dopa. In addition to tyrosine, is able to catalyze the hydroxylation of phenylalanine and tryptophan but with lower specificity. Positively regulates the regression of retinal hyaloid vessels during postnatal development. In Rattus norvegicus (Rat), this protein is Tyrosine 3-monooxygenase (Th).